A 1770-amino-acid chain; its full sequence is Vitellogenin (1770 aa).

The signal sequence occupies residues 1-16 (MLLLLTLLLFAGTVAA). In terms of domain architecture, Vitellogenin spans 22-809 (WQVGNEYTYL…SEDSVIPRIL (788 aa)). A disulfide bond links C178 and C222. N-linked (GlcNAc...) asparagine glycosylation occurs at N296. The segment at 373–394 (SSSSSISSSEENDFWQPKPTLE) is disordered. A glycan (N-linked (GlcNAc...) asparagine) is linked at N1067. The 194-residue stretch at 1442 to 1635 (TSCMLDKTRA…SYALISNQCE (194 aa)) folds into the VWFD domain. 2 disulfides stabilise this stretch: C1444–C1598 and C1466–C1634.

As to expression, accumulates in the hemolymph. Represents up to 70% of the queen's hemolymph proteins. During the first week of the worker adult life, when it becomes a nurse bee and performs brood-rearing tasks, the vitellogenin titer increases and may account for up to 40% of the total hemolymph proteins.

The protein localises to the secreted. Its function is as follows. Precursor of the egg-yolk proteins that are sources of nutrients during embryonic development. Involved in the differentiation of honeybee larvae into queens. The protein is Vitellogenin (Vg) of Apis mellifera (Honeybee).